The sequence spans 423 residues: AP-1 complex subunit mu-1 (423 aa).

An N-acetylserine modification is found at S2. Residues T152, T154, and T223 each carry the phosphothreonine modification. The region spanning 168 to 421 is the MHD domain; the sequence is KNEVFLDVIE…ITQNGDYQLR (254 aa).

It belongs to the adaptor complexes medium subunit family. Adaptor protein complex 1 (AP-1) is a heterotetramer composed of two large adaptins (gamma-type subunit AP1G1 and beta-type subunit AP1B1), a medium adaptin (mu-type subunit AP1M1 or AP1M2) and a small adaptin (sigma-type subunit AP1S1 or AP1S2 or AP1S3). Interacts with MARCHF11. Phosphorylation of membrane-bound AP1M1/AP1M2 increases its affinity for sorting signals.

It localises to the golgi apparatus. The protein resides in the cytoplasmic vesicle. Its subcellular location is the clathrin-coated vesicle membrane. In terms of biological role, subunit of clathrin-associated adaptor protein complex 1 that plays a role in protein sorting in the trans-Golgi network (TGN) and endosomes. The AP complexes mediate the recruitment of clathrin to membranes and the recognition of sorting signals within the cytosolic tails of transmembrane cargo molecules. In Mus musculus (Mouse), this protein is AP-1 complex subunit mu-1 (Ap1m1).